Consider the following 101-residue polypeptide: MAKSSMKAREAKRAQLVAKFAEKRAALKAIISSPTTSDDDRWDAVLKLQALPRDSSAARQRNRCSQTGRPHGFLRKFGLSRIKLREATMRGEVPGLRKASW.

The protein belongs to the universal ribosomal protein uS14 family. In terms of assembly, part of the 30S ribosomal subunit. Contacts proteins S3 and S10.

Binds 16S rRNA, required for the assembly of 30S particles and may also be responsible for determining the conformation of the 16S rRNA at the A site. This Shewanella halifaxensis (strain HAW-EB4) protein is Small ribosomal subunit protein uS14.